The following is a 261-amino-acid chain: Cytochrome c oxidase subunit 3 (261 aa).

Residues 1 to 15 (MTHQTHAYHMVNPSP) lie on the Mitochondrial matrix side of the membrane. Residues 16 to 34 (WPLTGALSALLMTSGLIMW) traverse the membrane as a helical segment. Over 35 to 40 (FHYNSM) the chain is Mitochondrial intermembrane. Residues 41–66 (SLLTLGFTTNLLTMYQWWRDVIREGT) traverse the membrane as a helical segment. Topologically, residues 67-72 (FQGHHT) are mitochondrial matrix. Residues 73–105 (PIVQKGLRYGMVLFIVSEVFFFAGFFWAFYHSS) form a helical membrane-spanning segment. The Mitochondrial intermembrane portion of the chain corresponds to 106–128 (LAPTPELGGCWPPTGIIPLNPLE). A helical membrane pass occupies residues 129–152 (VPLLNTSVLLASGVSITWAHHSLM). Topologically, residues 153-155 (EGN) are mitochondrial matrix. A helical membrane pass occupies residues 156-183 (RKHMLQALFITISLGVYFTLLQASEYYE). Over 184 to 190 (TSFTISD) the chain is Mitochondrial intermembrane. Residues 191–223 (GVYGSTFFMATGFHGLHVIIGSTFLIVCFLRQL) form a helical membrane-spanning segment. Residues 224–232 (YYHFTSNHH) are Mitochondrial matrix-facing. A helical transmembrane segment spans residues 233 to 256 (FGFEAAAWYWHFVDVVWLFLYVSI). Residues 257–261 (YWWGS) lie on the Mitochondrial intermembrane side of the membrane.

This sequence belongs to the cytochrome c oxidase subunit 3 family. In terms of assembly, component of the cytochrome c oxidase (complex IV, CIV), a multisubunit enzyme composed of 14 subunits. The complex is composed of a catalytic core of 3 subunits MT-CO1, MT-CO2 and MT-CO3, encoded in the mitochondrial DNA, and 11 supernumerary subunits COX4I, COX5A, COX5B, COX6A, COX6B, COX6C, COX7A, COX7B, COX7C, COX8 and NDUFA4, which are encoded in the nuclear genome. The complex exists as a monomer or a dimer and forms supercomplexes (SCs) in the inner mitochondrial membrane with NADH-ubiquinone oxidoreductase (complex I, CI) and ubiquinol-cytochrome c oxidoreductase (cytochrome b-c1 complex, complex III, CIII), resulting in different assemblies (supercomplex SCI(1)III(2)IV(1) and megacomplex MCI(2)III(2)IV(2)).

It localises to the mitochondrion inner membrane. The enzyme catalyses 4 Fe(II)-[cytochrome c] + O2 + 8 H(+)(in) = 4 Fe(III)-[cytochrome c] + 2 H2O + 4 H(+)(out). In terms of biological role, component of the cytochrome c oxidase, the last enzyme in the mitochondrial electron transport chain which drives oxidative phosphorylation. The respiratory chain contains 3 multisubunit complexes succinate dehydrogenase (complex II, CII), ubiquinol-cytochrome c oxidoreductase (cytochrome b-c1 complex, complex III, CIII) and cytochrome c oxidase (complex IV, CIV), that cooperate to transfer electrons derived from NADH and succinate to molecular oxygen, creating an electrochemical gradient over the inner membrane that drives transmembrane transport and the ATP synthase. Cytochrome c oxidase is the component of the respiratory chain that catalyzes the reduction of oxygen to water. Electrons originating from reduced cytochrome c in the intermembrane space (IMS) are transferred via the dinuclear copper A center (CU(A)) of subunit 2 and heme A of subunit 1 to the active site in subunit 1, a binuclear center (BNC) formed by heme A3 and copper B (CU(B)). The BNC reduces molecular oxygen to 2 water molecules using 4 electrons from cytochrome c in the IMS and 4 protons from the mitochondrial matrix. This Canis lupus (Gray wolf) protein is Cytochrome c oxidase subunit 3 (MT-CO3).